A 901-amino-acid polypeptide reads, in one-letter code: Probable inorganic carbon transporter subunit DabA (901 aa).

4 residues coordinate Zn(2+): Cys424, Asp426, His606, and Cys621.

The protein belongs to the inorganic carbon transporter (TC 9.A.2) DabA family. In terms of assembly, forms a complex with DabB. Zn(2+) serves as cofactor.

The protein localises to the cell membrane. Its function is as follows. Part of an energy-coupled inorganic carbon pump. This is Probable inorganic carbon transporter subunit DabA from Staphylococcus aureus (strain bovine RF122 / ET3-1).